A 136-amino-acid polypeptide reads, in one-letter code: 1,4-dihydroxy-2-naphthoyl-CoA hydrolase (136 aa).

Glutamate 63 acts as the Nucleophile or proton acceptor in catalysis. Substrate-binding positions include glycine 82, histidine 89–serine 92, and histidine 106–histidine 111.

It belongs to the thioesterase PaaI family. Homotetramer. Dimer of dimers.

The enzyme catalyses 1,4-dihydroxy-2-naphthoyl-CoA + H2O = 1,4-dihydroxy-2-naphthoate + CoA + H(+). It functions in the pathway quinol/quinone metabolism; 1,4-dihydroxy-2-naphthoate biosynthesis; 1,4-dihydroxy-2-naphthoate from chorismate: step 7/7. The protein operates within quinol/quinone metabolism; menaquinone biosynthesis. Catalyzes the hydrolysis of 1,4-dihydroxy-2-naphthoyl-CoA (DHNA-CoA) to 1,4-dihydroxy-2-naphthoate (DHNA). Also shows significant activity toward a wide range of acyl-CoA thioesters, and minimal activity toward benzoyl-holoEntB. This Escherichia coli (strain K12) protein is 1,4-dihydroxy-2-naphthoyl-CoA hydrolase.